Reading from the N-terminus, the 116-residue chain is Proline-rich protein 9 (116 aa).

This is Proline-rich protein 9 (Prr9) from Mus musculus (Mouse).